The following is a 147-amino-acid chain: SsrA-binding protein (147 aa).

The tract at residues 124-147 (KKHDKRQDIKDRDWARKQARQDFS) is disordered. Positions 128-147 (KRQDIKDRDWARKQARQDFS) are enriched in basic and acidic residues.

This sequence belongs to the SmpB family.

The protein resides in the cytoplasm. Required for rescue of stalled ribosomes mediated by trans-translation. Binds to transfer-messenger RNA (tmRNA), required for stable association of tmRNA with ribosomes. tmRNA and SmpB together mimic tRNA shape, replacing the anticodon stem-loop with SmpB. tmRNA is encoded by the ssrA gene; the 2 termini fold to resemble tRNA(Ala) and it encodes a 'tag peptide', a short internal open reading frame. During trans-translation Ala-aminoacylated tmRNA acts like a tRNA, entering the A-site of stalled ribosomes, displacing the stalled mRNA. The ribosome then switches to translate the ORF on the tmRNA; the nascent peptide is terminated with the 'tag peptide' encoded by the tmRNA and targeted for degradation. The ribosome is freed to recommence translation, which seems to be the essential function of trans-translation. The polypeptide is SsrA-binding protein (Neorickettsia sennetsu (strain ATCC VR-367 / Miyayama) (Ehrlichia sennetsu)).